The following is a 303-amino-acid chain: MLDVCLLGTAGMMPLPNRWLTALSLKYNGSNILIDCGEGTQIAMKEAGINFKPIDILCITHFHADHISGLPGLLLTMGNAERTEPLTIIGPKGLTRVVTALRTIAPELPFEIKCIELNEQDEYFEMNGYHIHAFRVKHAVLCYGYSVEIKRSGRFSVERANEKEIPMRLWNPLQKGNTVEFEGRVYTPDMVLGPARKGIKVTYCTDSRPLEHIVEAAEGSDLFICEGMYAEKEKIVKAKQYKHMTFYEAADMAKRAGVKELWLTHFSPSLVRADDYMPQVRDIFANAYLGKDAKSVELMFDED.

Zn(2+) is bound by residues His61, His63, Asp65, His66, His138, Asp206, and His265. Asp65 acts as the Proton acceptor in catalysis.

The protein belongs to the RNase Z family. In terms of assembly, homodimer. The cofactor is Zn(2+).

It carries out the reaction Endonucleolytic cleavage of RNA, removing extra 3' nucleotides from tRNA precursor, generating 3' termini of tRNAs. A 3'-hydroxy group is left at the tRNA terminus and a 5'-phosphoryl group is left at the trailer molecule.. Its function is as follows. Zinc phosphodiesterase, which displays some tRNA 3'-processing endonuclease activity. Probably involved in tRNA maturation, by removing a 3'-trailer from precursor tRNA. This Agathobacter rectalis (strain ATCC 33656 / DSM 3377 / JCM 17463 / KCTC 5835 / VPI 0990) (Eubacterium rectale) protein is Ribonuclease Z.